A 318-amino-acid polypeptide reads, in one-letter code: Transaldolase (318 aa).

K132 acts as the Schiff-base intermediate with substrate in catalysis.

It belongs to the transaldolase family. Type 1 subfamily. As to quaternary structure, homodimer.

The protein resides in the cytoplasm. The catalysed reaction is D-sedoheptulose 7-phosphate + D-glyceraldehyde 3-phosphate = D-erythrose 4-phosphate + beta-D-fructose 6-phosphate. Its pathway is carbohydrate degradation; pentose phosphate pathway; D-glyceraldehyde 3-phosphate and beta-D-fructose 6-phosphate from D-ribose 5-phosphate and D-xylulose 5-phosphate (non-oxidative stage): step 2/3. Functionally, transaldolase is important for the balance of metabolites in the pentose-phosphate pathway. This Shewanella putrefaciens (strain CN-32 / ATCC BAA-453) protein is Transaldolase.